The following is a 291-amino-acid chain: Polyamine aminopropyltransferase (291 aa).

The 241-residue stretch at 5–245 folds into the PABS domain; it reads PGPVSLIEPL…YAVNYIIGSL (241 aa). Q36 is an S-methyl-5'-thioadenosine binding site. Spermidine-binding residues include H67 and E91. S-methyl-5'-thioadenosine contacts are provided by residues D111 and 143-144; that span reads DG. The active-site Proton acceptor is D164.

Belongs to the spermidine/spermine synthase family. As to quaternary structure, homodimer or homotetramer.

Its subcellular location is the cytoplasm. It carries out the reaction S-adenosyl 3-(methylsulfanyl)propylamine + putrescine = S-methyl-5'-thioadenosine + spermidine + H(+). It participates in amine and polyamine biosynthesis; spermidine biosynthesis; spermidine from putrescine: step 1/1. Catalyzes the irreversible transfer of a propylamine group from the amino donor S-adenosylmethioninamine (decarboxy-AdoMet) to putrescine (1,4-diaminobutane) to yield spermidine. The protein is Polyamine aminopropyltransferase of Pyrobaculum islandicum (strain DSM 4184 / JCM 9189 / GEO3).